The primary structure comprises 678 residues: F-box/LRR-repeat protein 5 (678 aa).

A hemerythrin-like region spans residues 1-159 (MAPFPDEVDL…IKKKVIAQHC (159 aa)). Fe(3+)-binding residues include His-15, His-57, Glu-58, Glu-61, His-80, His-126, and Glu-130. The F-box domain occupies 202 to 248 (SSSISSLPPEVMLNIFTYLNPQDLCRCSQVNTEWAQLAKTGSLWRHL). The disordered stretch occupies residues 285–308 (YQEWDEDADIDESEETGEEEDSSI). Positions 287–306 (EWDEDADIDESEETGEEEDS) are enriched in acidic residues. LRR repeat units follow at residues 314 to 340 (EKEL…VLAY), 341 to 366 (SSAT…DLTQ), 367 to 392 (TDIS…DLSG), 393 to 420 (CDKI…RLLK), 566 to 594 (HSDI…SLSG), 595 to 622 (CHQI…NLSG), and 623 to 648 (CLNV…HFYY). [2Fe-2S] cluster is bound by residues Cys-649, Cys-663, Cys-673, and Cys-674. One copy of the LRR 8 repeat lies at 655–678 (PHGATASGCQNLQCGFRMCCRSGE).

Part of a SCF (SKP1-cullin-F-box) protein ligase complex. [2Fe-2S] cluster is required as a cofactor. In terms of processing, ubiquitinated upon iron and oxygen depletion, leading to its degradation by the proteasome. Ubiquitination is regulated by the hemerythrin-like region that acts as an oxygen and iron sensor.

It is found in the cytoplasm. It localises to the perinuclear region. The protein resides in the nucleus. It functions in the pathway protein modification; protein ubiquitination. Functionally, component of some SCF (SKP1-cullin-F-box) protein ligase complex that plays a central role in iron homeostasis by promoting the ubiquitination and subsequent degradation of ireb2/irp2. Upon high iron and oxygen level, it specifically recognizes and binds ireb2/irp2, promoting its ubiquitination and degradation by the proteasome. This chain is F-box/LRR-repeat protein 5 (fbxl5), found in Xenopus laevis (African clawed frog).